Reading from the N-terminus, the 334-residue chain is Beta-ketoacyl-[acyl-carrier-protein] synthase III (334 aa).

Active-site residues include Cys-116 and His-256. An ACP-binding region spans residues 257–261; the sequence is QANLR. Asn-286 is a catalytic residue.

The protein belongs to the thiolase-like superfamily. FabH family. As to quaternary structure, homodimer.

Its subcellular location is the cytoplasm. The enzyme catalyses malonyl-[ACP] + acetyl-CoA + H(+) = 3-oxobutanoyl-[ACP] + CO2 + CoA. It functions in the pathway lipid metabolism; fatty acid biosynthesis. Its function is as follows. Catalyzes the condensation reaction of fatty acid synthesis by the addition to an acyl acceptor of two carbons from malonyl-ACP. Catalyzes the first condensation reaction which initiates fatty acid synthesis and may therefore play a role in governing the total rate of fatty acid production. Possesses both acetoacetyl-ACP synthase and acetyl transacylase activities. Its substrate specificity determines the biosynthesis of branched-chain and/or straight-chain of fatty acids. In Phocaeicola vulgatus (strain ATCC 8482 / DSM 1447 / JCM 5826 / CCUG 4940 / NBRC 14291 / NCTC 11154) (Bacteroides vulgatus), this protein is Beta-ketoacyl-[acyl-carrier-protein] synthase III.